Here is a 156-residue protein sequence, read N- to C-terminus: V-type proton ATPase 16 kDa proteolipid subunit c (156 aa).

At 1-7 (MAENPIY) the chain is on the lumenal side. The chain crosses the membrane as a helical span at residues 8–30 (GPFFGVMGAASAIIFSALGAAYG). Over 31–52 (TAKSGTGIAAMSVMRPELIMKS) the chain is Cytoplasmic. A helical membrane pass occupies residues 53–73 (IIPVVMAGIIAIYGLVVAVLI). Over 74–92 (AGSLDAPSNNYTLYKGFIH) the chain is Lumenal. The helical transmembrane segment at 93 to 114 (LGAGLAVGFSGLAAGFAIGIVG) threads the bilayer. Over 115–126 (DAGVRGTAQQPR) the chain is Cytoplasmic. The chain crosses the membrane as a helical span at residues 127 to 152 (LFVGMILILIFAEVLGLYGLIVAIYL). Residues 153–156 (YTKQ) are Lumenal-facing.

Belongs to the V-ATPase proteolipid subunit family. As to quaternary structure, V-ATPase is a heteromultimeric enzyme made up of two complexes: the ATP-hydrolytic V1 complex and the proton translocation V0 complex. The V1 complex consists of three catalytic AB heterodimers that form a heterohexamer, three peripheral stalks each consisting of EG heterodimers, one central rotor including subunits D and F, and the regulatory subunits C and H. The proton translocation complex V0 consists of the proton transport subunit a, a ring of proteolipid subunits c9c'', rotary subunit d, subunits e and f, and the accessory subunits VhaAC45 and ATP6AP2.

It is found in the membrane. Proton-conducting pore forming subunit of the V0 complex of vacuolar(H+)-ATPase (V-ATPase), a multisubunit enzyme composed of a peripheral complex (V1) that hydrolyzes ATP and a membrane integral complex (V0) that translocates protons. V-ATPase is responsible for acidifying and maintaining the pH of intracellular compartments and in some cell types, is targeted to the plasma membrane, where it is responsible for acidifying the extracellular environment. In Heliothis virescens (Tobacco budworm moth), this protein is V-type proton ATPase 16 kDa proteolipid subunit c (VHA16).